We begin with the raw amino-acid sequence, 401 residues long: Argininosuccinate synthase (401 aa).

Position 8-16 (8-16 (AYSGGLDTS)) interacts with ATP. The L-citrulline site is built by tyrosine 86 and serine 91. An ATP-binding site is contributed by glycine 116. 3 residues coordinate L-aspartate: threonine 118, asparagine 122, and aspartate 123. Residue asparagine 122 coordinates L-citrulline. Arginine 126, serine 175, serine 184, glutamate 260, and tyrosine 272 together coordinate L-citrulline.

It belongs to the argininosuccinate synthase family. Type 1 subfamily. As to quaternary structure, homotetramer.

The protein localises to the cytoplasm. It carries out the reaction L-citrulline + L-aspartate + ATP = 2-(N(omega)-L-arginino)succinate + AMP + diphosphate + H(+). It participates in amino-acid biosynthesis; L-arginine biosynthesis; L-arginine from L-ornithine and carbamoyl phosphate: step 2/3. This chain is Argininosuccinate synthase, found in Clostridium kluyveri (strain ATCC 8527 / DSM 555 / NBRC 12016 / NCIMB 10680 / K1).